Here is a 293-residue protein sequence, read N- to C-terminus: Cell adhesion molecule CEACAM21 (293 aa).

Positions 1 to 34 are cleaved as a signal peptide; that stretch reads MGPPSACPHRECIPWQGLLLTASLLTFWNAPTTA. Residues 35-240 lie on the Extracellular side of the membrane; sequence WLFIASAPFE…TVKSDDNTLG (206 aa). Residue asparagine 111 is glycosylated (N-linked (GlcNAc...) asparagine). An Ig-like C2-type domain is found at 147 to 231; sequence PSIQASSTTV…SNRSDPLKLT (85 aa). Cysteines 166 and 214 form a disulfide. A helical transmembrane segment spans residues 241-261; sequence ILIGVLVGSLLVAALVCFLLL. Residues 262-293 are Cytoplasmic-facing; it reads RKTGRASDQSDFREQQPPASTPGHGPSDSSIS. A disordered region spans residues 267–293; the sequence is ASDQSDFREQQPPASTPGHGPSDSSIS.

This sequence belongs to the immunoglobulin superfamily. CEA family.

It is found in the membrane. In Homo sapiens (Human), this protein is Cell adhesion molecule CEACAM21.